The following is a 356-amino-acid chain: Probable arabinogalactan endo-beta-1,4-galactanase A (356 aa).

Residues 1-21 (MLGKTVLLPLLVLLCHSLASA) form the signal peptide. N-linked (GlcNAc...) asparagine glycosylation is present at Asn-133. The active-site Proton donor is the Glu-157. Glu-268 serves as the catalytic Nucleophile.

It belongs to the glycosyl hydrolase 53 family.

Its subcellular location is the secreted. The catalysed reaction is The enzyme specifically hydrolyzes (1-&gt;4)-beta-D-galactosidic linkages in type I arabinogalactans.. In terms of biological role, endogalactanase involved in the degradation of plant cell wall polysaccharides, and more particularly of hairy regions of pectin. The sequence is that of Probable arabinogalactan endo-beta-1,4-galactanase A (galA) from Aspergillus fumigatus (strain CBS 144.89 / FGSC A1163 / CEA10) (Neosartorya fumigata).